The primary structure comprises 1624 residues: Putative serine/threonine-protein kinase/receptor R831 (1624 aa).

Positions 1–25 (MHSVYTKYTIILILLVIYQGLPTNT) are cleaved as a signal peptide. Asparagine 152, asparagine 169, asparagine 200, asparagine 205, asparagine 225, asparagine 240, asparagine 245, asparagine 292, asparagine 364, asparagine 479, asparagine 541, asparagine 720, and asparagine 737 each carry an N-linked (GlcNAc...) asparagine; by host glycan. The helical transmembrane segment at 747 to 767 (VIPIACIFGLLLLTLLIVIIF) threads the bilayer. Residues 786 to 1049 (LEIGETLGTG…EIMTRLSNIL (264 aa)) form the Protein kinase 1 domain. ATP-binding positions include 792-800 (LGTGGYGEV) and lysine 813. The active-site Proton acceptor is aspartate 908. Low complexity predominate over residues 1054–1093 (NMTSGTSSSSLSSGGIGKSITDSKSSNSRSSVESSNTSNT). Residues 1054-1101 (NMTSGTSSSSLSSGGIGKSITDSKSSNSRSSVESSNTSNTFRGIDRHN) are disordered. The Guanylate cyclase domain occupies 1109-1252 (TVAFIDIISA…STVNITGKIT (144 aa)). The Protein kinase 2 domain occupies 1364–1615 (ISIGKQIGLG…MTEVVQQLML (252 aa)). Residues 1370-1378 (IGLGSYGIV) and lysine 1391 contribute to the ATP site. Aspartate 1487 functions as the Proton acceptor in the catalytic mechanism.

The protein localises to the membrane. The enzyme catalyses L-seryl-[protein] + ATP = O-phospho-L-seryl-[protein] + ADP + H(+). It carries out the reaction L-threonyl-[protein] + ATP = O-phospho-L-threonyl-[protein] + ADP + H(+). This chain is Putative serine/threonine-protein kinase/receptor R831, found in Acanthamoeba polyphaga (Amoeba).